The primary structure comprises 86 residues: Mitochondrial import inner membrane translocase subunit Tim10 (86 aa).

The short motif at 29–54 (CQAKCIATAFRESELTKGEAVCLDRC) is the Twin CX3C motif element. Cystine bridges form between Cys29–Cys54 and Cys33–Cys50.

The protein belongs to the small Tim family. In terms of assembly, heterohexamer; composed of 3 copies of tim-9/tin-9.1 and 3 copies of tim-10/tin-10, named soluble 70 kDa complex. The complex associates with the tim-22 component of the TIM22 complex. Interacts with multi-pass transmembrane proteins in transit.

The protein localises to the mitochondrion inner membrane. In terms of biological role, mitochondrial intermembrane chaperone that participates in the import and insertion of multi-pass transmembrane proteins into the mitochondrial inner membrane. May also be required for the transfer of beta-barrel precursors from the TOM complex to the sorting and assembly machinery (SAM complex) of the outer membrane. Acts as a chaperone-like protein that protects the hydrophobic precursors from aggregation and guide them through the mitochondrial intermembrane space. In Caenorhabditis elegans, this protein is Mitochondrial import inner membrane translocase subunit Tim10 (tin-10).